A 288-amino-acid chain; its full sequence is Cyclin-dependent kinase 2 homolog (288 aa).

A Protein kinase domain is found at 4-284; sequence YHGLEKIGEG…AKEALQHAYF (281 aa). ATP is bound by residues 10–18 and lysine 32; that span reads IGEGTYGVV. Threonine 14 is modified (phosphothreonine). Tyrosine 15 is subject to Phosphotyrosine. Catalysis depends on aspartate 125, which acts as the Proton acceptor. Phosphothreonine is present on threonine 158.

It belongs to the protein kinase superfamily. CMGC Ser/Thr protein kinase family. CDC2/CDKX subfamily. As to quaternary structure, may form a complex composed of at least the catalytic subunit CRK2 and a cyclin. Mg(2+) serves as cofactor.

The protein resides in the cytoplasm. It catalyses the reaction L-seryl-[protein] + ATP = O-phospho-L-seryl-[protein] + ADP + H(+). It carries out the reaction L-threonyl-[protein] + ATP = O-phospho-L-threonyl-[protein] + ADP + H(+). The catalysed reaction is [DNA-directed RNA polymerase] + ATP = phospho-[DNA-directed RNA polymerase] + ADP + H(+). Phosphorylation at Thr-14 or Tyr-15 inactivates the enzyme, while phosphorylation at Thr-158 activates it. Its function is as follows. Serine/threonine-protein kinase. Involved in the control of the cell cycle. Required for entry into S-phase and mitosis. Probable component of the kinase complex that phosphorylates the repetitive C-terminus of RNA polymerase II. The polypeptide is Cyclin-dependent kinase 2 homolog (Plasmodium knowlesi (strain H)).